The primary structure comprises 195 residues: C2 domain-containing protein DDB_G0290753 (195 aa).

One can recognise a C2 domain in the interval 38 to 161; sequence KKLTKETKFE…NIKKYSYTFK (124 aa). Residues Asp72, Asp78, Asp131, Asp133, and Asp139 each contribute to the Ca(2+) site.

Requires Ca(2+) as cofactor.

The protein is C2 domain-containing protein DDB_G0290753 of Dictyostelium discoideum (Social amoeba).